The following is a 334-amino-acid chain: Ferredoxin--NADP reductase (334 aa).

FAD is bound by residues Asp-33, Gln-41, Tyr-46, Ala-86, Phe-120, Asp-286, and Thr-327.

It belongs to the ferredoxin--NADP reductase type 2 family. In terms of assembly, homodimer. FAD serves as cofactor.

The enzyme catalyses 2 reduced [2Fe-2S]-[ferredoxin] + NADP(+) + H(+) = 2 oxidized [2Fe-2S]-[ferredoxin] + NADPH. The protein is Ferredoxin--NADP reductase of Rickettsia prowazekii (strain Madrid E).